The following is an 88-amino-acid chain: MGIARILSAVLFLSVLFVVTFPTLLSADHHDGRTDTCRLPSDRGRCKASFERWYFNGTTCTKFVYGGYGGNDNRFPTEKACMKRCAKA.

The signal sequence occupies residues 1 to 27; the sequence is MGIARILSAVLFLSVLFVVTFPTLLSA. Residues 28 to 33 constitute a propeptide that is removed on maturation; that stretch reads DHHDGR. Residues 37–85 enclose the BPTI/Kunitz inhibitor domain; that stretch reads CRLPSDRGRCKASFERWYFNGTTCTKFVYGGYGGNDNRFPTEKACMKRC. Intrachain disulfides connect Cys-37-Cys-85 and Cys-60-Cys-81.

This sequence belongs to the venom Kunitz-type family. 01 (intermediate) subfamily. In terms of tissue distribution, expressed by the venom gland.

The protein localises to the secreted. Functionally, serine protease inhibitor that inhibits trypsin at a molar ratio of 1:1. The chain is Kunitz-type U15-theraphotoxin-Hhn1r from Cyriopagopus hainanus (Chinese bird spider).